The following is a 294-amino-acid chain: ATP synthase gamma chain (294 aa).

This sequence belongs to the ATPase gamma chain family. In terms of assembly, F-type ATPases have 2 components, CF(1) - the catalytic core - and CF(0) - the membrane proton channel. CF(1) has five subunits: alpha(3), beta(3), gamma(1), delta(1), epsilon(1). CF(0) has three main subunits: a, b and c.

It is found in the cell inner membrane. Functionally, produces ATP from ADP in the presence of a proton gradient across the membrane. The gamma chain is believed to be important in regulating ATPase activity and the flow of protons through the CF(0) complex. The polypeptide is ATP synthase gamma chain (Rhizobium leguminosarum bv. trifolii (strain WSM2304)).